A 245-amino-acid polypeptide reads, in one-letter code: Glycerophosphodiester phosphodiesterase (245 aa).

The 240-residue stretch at 2 to 241 (TKIFAHRGFK…DFPDRAVKIR (240 aa)) folds into the GP-PDE domain. The active-site Proton acceptor is histidine 7. Positions 34 and 36 each coordinate a divalent metal cation. Histidine 49 serves as the catalytic Proton donor. Residue glutamate 110 coordinates a divalent metal cation.

The protein belongs to the glycerophosphoryl diester phosphodiesterase family. Ni(2+) serves as cofactor. The cofactor is Co(2+). Mn(2+) is required as a cofactor.

The catalysed reaction is a sn-glycero-3-phosphodiester + H2O = an alcohol + sn-glycerol 3-phosphate + H(+). Its activity is regulated as follows. Inhibited by EDTA and various organic solvents such as chloroform, toluene or benzene. Glycerophosphodiester phosphodiesterase hydrolyzes glycerophosphodiesters into glycerol-3-phosphate (G3P) and the corresponding alcohol. Can hydrolyze the model substrate bis-(p-nitrophenyl phosphate) (bis(pNPP)) to p-nitrophenol. Can also catalyze the degradation of diphenyl phosphate (DPHP) to phenyl phosphate (PHP). DPHP is an aryl phosphate ester used as a chemical additive and an industrial catalyst that can easily spread to the environment and exhibits toxicity toward organisms. The sequence is that of Glycerophosphodiester phosphodiesterase from Bacillus altitudinis.